We begin with the raw amino-acid sequence, 209 residues long: Imidazole glycerol phosphate synthase subunit HisH (209 aa).

The Glutamine amidotransferase type-1 domain maps to 1-205; that stretch reads MIAIIDYGMG…KGVVETWKSS (205 aa). The active-site Nucleophile is Cys79. Catalysis depends on residues His180 and Glu182.

Heterodimer of HisH and HisF.

Its subcellular location is the cytoplasm. The catalysed reaction is 5-[(5-phospho-1-deoxy-D-ribulos-1-ylimino)methylamino]-1-(5-phospho-beta-D-ribosyl)imidazole-4-carboxamide + L-glutamine = D-erythro-1-(imidazol-4-yl)glycerol 3-phosphate + 5-amino-1-(5-phospho-beta-D-ribosyl)imidazole-4-carboxamide + L-glutamate + H(+). It catalyses the reaction L-glutamine + H2O = L-glutamate + NH4(+). Its pathway is amino-acid biosynthesis; L-histidine biosynthesis; L-histidine from 5-phospho-alpha-D-ribose 1-diphosphate: step 5/9. In terms of biological role, IGPS catalyzes the conversion of PRFAR and glutamine to IGP, AICAR and glutamate. The HisH subunit catalyzes the hydrolysis of glutamine to glutamate and ammonia as part of the synthesis of IGP and AICAR. The resulting ammonia molecule is channeled to the active site of HisF. This chain is Imidazole glycerol phosphate synthase subunit HisH, found in Bacillus thuringiensis (strain Al Hakam).